Consider the following 444-residue polypeptide: Vacuolar protein sorting-associated protein 4B (444 aa).

The region spanning 4–82 is the MIT domain; that stretch reads TNTNLQKAID…KEYLKKKEKK (79 aa). A coiled-coil region spans residues 19-82; that stretch reads AQEDKAGNYE…KEYLKKKEKK (64 aa). Residues 77 to 118 are disordered; it reads KKKEKKPQKPVKEEQSGPVDEKGNDSDGEAESDDPEKKKLQN. Basic and acidic residues predominate over residues 86–101; that stretch reads PVKEEQSGPVDEKGND. Residues Ser-102 and Ser-108 each carry the phosphoserine modification. 174 to 181 is an ATP binding site; the sequence is GPPGTGKS. The residue at position 410 (Ser-410) is a Phosphoserine.

It belongs to the AAA ATPase family. As to quaternary structure, proposed to be monomeric or homodimeric in nucleotide-free form and to oligomerize upon binding to ATP to form two stacked hexameric or heptameric rings with a central pore through which ESCRT-III substrates are translocated in an ATP-dependent manner. In vitro, associates on the inside of a helical tubular structure formed by a CHMP2A-CHMP3 polymer. Interacts with CHMP1A, CHMP1B, CHMP4B and CHMP6. Interacts with CHMP2A. Interacts with VPS4A; the interaction suggests a heteromeric assembly with VPS4A. Interacts with VTA1. High level expression seen in the kidney. It is also expressed in the heart, brain, spleen, lung, liver, skeletal muscle, and testis.

Its subcellular location is the late endosome membrane. It catalyses the reaction ATP + H2O = ADP + phosphate + H(+). Its function is as follows. Involved in late steps of the endosomal multivesicular bodies (MVB) pathway. Recognizes membrane-associated ESCRT-III assemblies and catalyzes their disassembly, possibly in combination with membrane fission. Redistributes the ESCRT-III components to the cytoplasm for further rounds of MVB sorting. MVBs contain intraluminal vesicles (ILVs) that are generated by invagination and scission from the limiting membrane of the endosome and mostly are delivered to lysosomes enabling degradation of membrane proteins, such as stimulated growth factor receptors, lysosomal enzymes and lipids. VPS4A/B are required for the exosomal release of SDCBP, CD63 and syndecan. In terms of biological role, (Microbial infection) In conjunction with the ESCRT machinery also appears to function in topologically equivalent membrane fission events, such as the terminal stages of cytokinesis and enveloped virus budding (lentiviruses). This is Vacuolar protein sorting-associated protein 4B from Mus musculus (Mouse).